The primary structure comprises 262 residues: 14-3-3-like protein A (262 aa).

Positions 240–262 are disordered; sequence DNAEEGGDEIKEAASKPEGEGHS. Basic and acidic residues predominate over residues 247-262; it reads DEIKEAASKPEGEGHS.

It belongs to the 14-3-3 family.

This Hordeum vulgare (Barley) protein is 14-3-3-like protein A.